Here is a 208-residue protein sequence, read N- to C-terminus: FMN-dependent NADH:quinone oxidoreductase (208 aa).

Residues 17-19 (SNS), 99-102 (MWNL), and 143-146 (SRGG) contribute to the FMN site.

Belongs to the azoreductase type 1 family. As to quaternary structure, homodimer. FMN is required as a cofactor.

The catalysed reaction is 2 a quinone + NADH + H(+) = 2 a 1,4-benzosemiquinone + NAD(+). It carries out the reaction N,N-dimethyl-1,4-phenylenediamine + anthranilate + 2 NAD(+) = 2-(4-dimethylaminophenyl)diazenylbenzoate + 2 NADH + 2 H(+). In terms of biological role, quinone reductase that provides resistance to thiol-specific stress caused by electrophilic quinones. Also exhibits azoreductase activity. Catalyzes the reductive cleavage of the azo bond in aromatic azo compounds to the corresponding amines. The chain is FMN-dependent NADH:quinone oxidoreductase from Staphylococcus aureus (strain MRSA252).